The chain runs to 154 residues: Jupiter microtubule associated homolog 1 (154 aa).

The residue at position 1 (methionine 1) is an N-acetylmethionine. Over residues 1–19 (MTTTTTFKGVDPNSRNSSR) the composition is skewed to polar residues. The tract at residues 1 to 154 (MTTTTTFKGV…PGGKSSLVLG (154 aa)) is disordered. An N-acetylthreonine; in Hematological and neurological expressed 1 protein, N-terminally processed modification is found at threonine 2. Serine 28 and serine 31 each carry phosphoserine. Threonine 54 carries the post-translational modification Phosphothreonine. 4 positions are modified to phosphoserine: serine 71, serine 87, serine 88, and serine 92. The segment covering 79–91 (SPGTQRSNSSEAS) has biased composition (polar residues). Over residues 96–108 (LDLKGEGDMHENV) the composition is skewed to basic and acidic residues. A compositionally biased stretch (pro residues) spans 125-138 (PAAPVPSPVAPAPV). Phosphoserine is present on serine 131. An N6-acetyllysine modification is found at lysine 148.

It belongs to the JUPITER family. As to quaternary structure, interacts with the complex composed, at least, of APC, CTNNB1 and GSK3B; the interaction takes place with the inactive form of GSK3B (phosphorylated at 'Ser-9'). As to expression, expressed in yolk sac, fetal brain, brain, spleen and bone marrow.

It is found in the nucleus. The protein localises to the cytoplasm. In terms of biological role, modulates negatively AKT-mediated GSK3B signaling. Induces CTNNB1 'Ser-33' phosphorylation and degradation through the suppression of the inhibitory 'Ser-9' phosphorylation of GSK3B, which represses the function of the APC:CTNNB1:GSK3B complex and the interaction with CDH1/E-cadherin in adherent junctions. Plays a role in the regulation of cell cycle and cell adhesion. Has an inhibitory role on AR-signaling pathway through the induction of receptor proteasomal degradation. The sequence is that of Jupiter microtubule associated homolog 1 from Mus musculus (Mouse).